A 435-amino-acid chain; its full sequence is Elongation factor 1-alpha (435 aa).

Positions 5-226 constitute a tr-type G domain; sequence KTHINLVVIG…DTMEPPKRPT (222 aa). A G1 region spans residues 14–21; it reads GHVDSGKS. 14–21 contacts GTP; it reads GHVDSGKS. The G2 stretch occupies residues 70–74; the sequence is GITID. A G3 region spans residues 91-94; that stretch reads DAPG. GTP is bound by residues 91 to 95 and 151 to 154; these read DAPGH and NKMD. Residues 151–154 form a G4 region; the sequence is NKMD. A G5 region spans residues 190–192; that stretch reads SGF.

This sequence belongs to the TRAFAC class translation factor GTPase superfamily. Classic translation factor GTPase family. EF-Tu/EF-1A subfamily.

Its subcellular location is the cytoplasm. Functionally, this protein promotes the GTP-dependent binding of aminoacyl-tRNA to the A-site of ribosomes during protein biosynthesis. The chain is Elongation factor 1-alpha from Cryptosporidium parvum.